Here is a 198-residue protein sequence, read N- to C-terminus: Na(+)-translocating NADH-quinone reductase subunit E (198 aa).

Helical transmembrane passes span 11–31, 39–59, 77–97, 110–130, 140–160, and 176–196; these read SIFIENMALSFFLGMCTFLAV, FGLGVAVIVVLTIAIPVNNLV, FLNFITFIGVIAALVQILEMI, GIFLPLITVNCAIFGGVSFMV, IVYGFGSGVGWMLAIVALAGI, and LGITFITVGLMALGFMSFSGV.

This sequence belongs to the NqrDE/RnfAE family. Composed of six subunits; NqrA, NqrB, NqrC, NqrD, NqrE and NqrF.

The protein localises to the cell inner membrane. The catalysed reaction is a ubiquinone + n Na(+)(in) + NADH + H(+) = a ubiquinol + n Na(+)(out) + NAD(+). NQR complex catalyzes the reduction of ubiquinone-1 to ubiquinol by two successive reactions, coupled with the transport of Na(+) ions from the cytoplasm to the periplasm. NqrA to NqrE are probably involved in the second step, the conversion of ubisemiquinone to ubiquinol. The chain is Na(+)-translocating NADH-quinone reductase subunit E from Photobacterium profundum (strain SS9).